Reading from the N-terminus, the 112-residue chain is Small ribosomal subunit protein bS6 (112 aa).

This sequence belongs to the bacterial ribosomal protein bS6 family.

Binds together with bS18 to 16S ribosomal RNA. In Chlamydia muridarum (strain MoPn / Nigg), this protein is Small ribosomal subunit protein bS6 (rpsF).